The primary structure comprises 527 residues: Peptide chain release factor 3 (527 aa).

Residues 9–277 (AKRRTFAIIS…AVVDWAPRPL (269 aa)) form the tr-type G domain. Residues 18–25 (SHPDAGKT), 86–90 (DTPGH), and 140–143 (NKLD) each bind GTP.

It belongs to the TRAFAC class translation factor GTPase superfamily. Classic translation factor GTPase family. PrfC subfamily.

It localises to the cytoplasm. Its function is as follows. Increases the formation of ribosomal termination complexes and stimulates activities of RF-1 and RF-2. It binds guanine nucleotides and has strong preference for UGA stop codons. It may interact directly with the ribosome. The stimulation of RF-1 and RF-2 is significantly reduced by GTP and GDP, but not by GMP. In Pseudomonas putida (strain ATCC 47054 / DSM 6125 / CFBP 8728 / NCIMB 11950 / KT2440), this protein is Peptide chain release factor 3.